A 249-amino-acid polypeptide reads, in one-letter code: Sugar fermentation stimulation protein homolog (249 aa).

Belongs to the SfsA family.

This Prochlorococcus marinus (strain MIT 9515) protein is Sugar fermentation stimulation protein homolog.